The sequence spans 890 residues: Translation initiation factor IF-2 (890 aa).

Disordered stretches follow at residues 31-164 (KLAQ…PAEP) and 189-266 (FKAP…ESLK). The span at 42 to 54 (SSSEKPSAKEKSV) shows a compositional bias: basic and acidic residues. Residues 55–72 (KVALAATSTPTASAEQAS) show a composition bias toward low complexity. A compositionally biased stretch (acidic residues) spans 114 to 128 (PEPELEVVDEVCDES). Basic and acidic residues-rich tracts occupy residues 149-163 (PQEK…KPAE) and 242-266 (PKRD…ESLK). The 170-residue stretch at 395-564 (IRSPIVAFMG…ALQAEVLELK (170 aa)) folds into the tr-type G domain. Positions 404-411 (GHVDHGKT) are G1. Residue 404-411 (GHVDHGKT) coordinates GTP. The G2 stretch occupies residues 429 to 433 (AITQH). Residues 450–453 (DTPG) form a G3 region. GTP-binding positions include 450–454 (DTPGH) and 504–507 (NKCD). The G4 stretch occupies residues 504 to 507 (NKCD). The tract at residues 540–542 (SAK) is G5.

Belongs to the TRAFAC class translation factor GTPase superfamily. Classic translation factor GTPase family. IF-2 subfamily.

It localises to the cytoplasm. Its function is as follows. One of the essential components for the initiation of protein synthesis. Protects formylmethionyl-tRNA from spontaneous hydrolysis and promotes its binding to the 30S ribosomal subunits. Also involved in the hydrolysis of GTP during the formation of the 70S ribosomal complex. This Chlamydia pneumoniae (Chlamydophila pneumoniae) protein is Translation initiation factor IF-2 (infB).